A 382-amino-acid polypeptide reads, in one-letter code: Putative oxidoreductase C1F5.03c (382 aa).

Residues I7–P27 traverse the membrane as a helical segment.

The protein belongs to the TDA3 family.

The protein resides in the cytoplasm. It localises to the membrane. Putative oxidoreductase that negatively regulates the retrieval of cargo from late endosomes to the Golgi. The chain is Putative oxidoreductase C1F5.03c from Schizosaccharomyces pombe (strain 972 / ATCC 24843) (Fission yeast).